Consider the following 200-residue polypeptide: Holliday junction branch migration complex subunit RuvA (200 aa).

The segment at 1–63 is domain I; sequence MIAFVRGQVA…EDSLTLFGFA (63 aa). The tract at residues 64-142 is domain II; the sequence is DEDEKQTFEL…APTGAGRSAG (79 aa). A flexible linker region spans residues 142-146; that stretch reads GVPAP. Positions 147–200 are domain III; that stretch reads AGAVWRDQVHQGLVGLGWPVRDAEKAVAAVAPEAGDVPDVAALLRAALRTLSKA.

This sequence belongs to the RuvA family. As to quaternary structure, homotetramer. Forms an RuvA(8)-RuvB(12)-Holliday junction (HJ) complex. HJ DNA is sandwiched between 2 RuvA tetramers; dsDNA enters through RuvA and exits via RuvB. An RuvB hexamer assembles on each DNA strand where it exits the tetramer. Each RuvB hexamer is contacted by two RuvA subunits (via domain III) on 2 adjacent RuvB subunits; this complex drives branch migration. In the full resolvosome a probable DNA-RuvA(4)-RuvB(12)-RuvC(2) complex forms which resolves the HJ.

The protein resides in the cytoplasm. In terms of biological role, the RuvA-RuvB-RuvC complex processes Holliday junction (HJ) DNA during genetic recombination and DNA repair, while the RuvA-RuvB complex plays an important role in the rescue of blocked DNA replication forks via replication fork reversal (RFR). RuvA specifically binds to HJ cruciform DNA, conferring on it an open structure. The RuvB hexamer acts as an ATP-dependent pump, pulling dsDNA into and through the RuvAB complex. HJ branch migration allows RuvC to scan DNA until it finds its consensus sequence, where it cleaves and resolves the cruciform DNA. This is Holliday junction branch migration complex subunit RuvA from Nocardioides sp. (strain ATCC BAA-499 / JS614).